Consider the following 409-residue polypeptide: Z-DNA-binding protein 1 (409 aa).

2 Z-binding domains span residues 8 to 70 and 85 to 147; these read LGTG…SLGG and SAAQ…TIYR. Residues lysine 17 and lysine 43 each participate in a glycyl lysine isopeptide (Lys-Gly) (interchain with G-Cter in ubiquitin) cross-link. The segment at 59–87 is disordered; it reads SSPAPATWSLGGDGASGDGAPEIPEDSAA. 2 consecutive short sequence motifs (RIP homotypic interaction motif (RHIM)) follow at residues 183–207 and 241–265; these read NSLISISNSKAIQIGHGNVMSRQTI and LIHLNKSMLRRVQLGHGNEMNLERD. Disordered regions lie at residues 269–307 and 323–369; these read HPIFSFSSSPPESTTTADPETAFNMQTPEPGPHPEGGTT and GNNN…TPSD. Over residues 270–290 the composition is skewed to low complexity; sequence PIFSFSSSPPESTTTADPETA. Basic and acidic residues predominate over residues 337-351; that stretch reads GTKESADSQELKEDT.

Homodimer. Interacts (via RIP homotypic interaction motif) with RIPK3; leading to RIPK3 activation and necroptosis; interaction is enhanced by CASP6. Interacts (via RIP homotypic interaction motif) with RIPK1. Component of the AIM2 PANoptosome complex, a multiprotein complex that drives inflammatory cell death (PANoptosis). Post-translationally, ubiquitinated; polyubiquitinated following influenza A virus (IAV) infection. In terms of processing, phosphorylated.

The protein localises to the cytoplasm. It localises to the nucleus. Its activity is regulated as follows. ZBP1-dependent necroptosis is normally inhibited by RIPK1: RIPK1 inhibits the ZBP1-induced activation of RIPK3 via FADD-mediated recruitment of CASP8, which cleaves RIPK1 and limits TNF-induced necroptosis. In terms of biological role, key innate sensor that recognizes and binds Z-RNA structures, which are produced by a number of viruses, such as herpesvirus, orthomyxovirus or flavivirus, and triggers different forms of cell death. ZBP1 acts as an essential mediator of pyroptosis, necroptosis and apoptosis (PANoptosis), an integral part of host defense against pathogens, by activating RIPK3, caspase-8 (CASP8), and the NLRP3 inflammasome. Key activator of necroptosis, a programmed cell death process in response to death-inducing TNF-alpha family members, via its ability to bind Z-RNA: once activated upon Z-RNA-binding, ZBP1 interacts and stimulates RIPK3 kinase, which phosphorylates and activates MLKL, triggering execution of programmed necrosis. In addition to TNF-induced necroptosis, necroptosis can also take place in the nucleus in response to orthomyxoviruses infection: ZBP1 recognizes and binds Z-RNA structures that are produced in infected nuclei by orthomyxoviruses, such as the influenza A virus (IAV), leading to ZBP1 activation, RIPK3 stimulation and subsequent MLKL phosphorylation, triggering disruption of the nuclear envelope and leakage of cellular DNA into the cytosol. ZBP1-dependent cell death in response to IAV infection promotes interleukin-1 alpha (IL1A) induction in an NLRP3-inflammasome-independent manner: IL1A expression is required for the optimal interleukin-1 beta (IL1B) production, and together, these cytokines promote infiltration of inflammatory neutrophils to the lung, leading to the formation of neutrophil extracellular traps. In addition to its direct role in driving necroptosis via its ability to sense Z-RNAs, also involved in PANoptosis triggered in response to bacterial infection: component of the AIM2 PANoptosome complex, a multiprotein complex that triggers PANoptosis. Also acts as the apical sensor of fungal infection responsible for activating PANoptosis. Involved in CASP8-mediated cell death via its interaction with RIPK1 but independently of its ability to sense Z-RNAs. In some cell types, also able to restrict viral replication by promoting cell death-independent responses. In response to flavivirus infection in neurons, promotes a cell death-independent pathway that restricts viral replication: together with RIPK3, promotes a death-independent transcriptional program that modifies the cellular metabolism via up-regulation expression of the enzyme ACOD1/IRG1 and production of the metabolite itaconate. Itaconate inhibits the activity of succinate dehydrogenase, generating a metabolic state in neurons that suppresses replication of viral genomes. The chain is Z-DNA-binding protein 1 from Rattus norvegicus (Rat).